The chain runs to 390 residues: RNA polymerase sigma factor SigA (390 aa).

The segment covering 48-57 has biased composition (acidic residues); it reads FLEPQTDEDD. The segment at 48–75 is disordered; it reads FLEPQTDEDDAKSGKAAKSRRRTQSKKK. The segment covering 62–75 has biased composition (basic residues); the sequence is KAAKSRRRTQSKKK. Residues 158–228 form a sigma-70 factor domain-2 region; the sequence is MVQSNLRLVV…TRAIADQSRT (71 aa). An Interaction with polymerase core subunit RpoC motif is present at residues 182–185; it reads DLIQ. The interval 237 to 312 is sigma-70 factor domain-3; that stretch reads ETISRIKKTT…ESDGETPEDQ (76 aa). A sigma-70 factor domain-4 region spans residues 325-378; that stretch reads VLDSLSPRERDVLRLRYGLDDGRMKTLEEIGQIFNVTRERIRQIEAKALRKLRH. Positions 351 to 370 form a DNA-binding region, H-T-H motif; that stretch reads LEEIGQIFNVTRERIRQIEA.

Belongs to the sigma-70 factor family. RpoD/SigA subfamily. In terms of assembly, interacts transiently with the RNA polymerase catalytic core.

It is found in the cytoplasm. Sigma factors are initiation factors that promote the attachment of RNA polymerase to specific initiation sites and are then released. This sigma factor is the primary sigma factor during exponential growth. This Nostoc sp. (strain PCC 7120 / SAG 25.82 / UTEX 2576) protein is RNA polymerase sigma factor SigA.